Here is a 942-residue protein sequence, read N- to C-terminus: MAAQPPTGIRLSALCPKFLHTNSTSHTWPFSAVAELIDNAYDPDVNAKQIWIDKTVISDHICLTFTDNGNGMTADKLHKMLSFGFSDKVTMNGHVPVGLYGNGFKSGSMRLGKDAMVFTKNGETMSVGFLSQTYLEVIKAEHVVVPIVTFNKHRQMINLTESKASLAAILEHSLFSTEQKLLAELNAIMGKKGTRIIIWNLRSYKNATEFDFEKDKYDIRIPEDLDETAGRKGYKKQERMDQIAPESDYSLRAYCSILYLKPRMQIIIRGQKVKTQLVSKSLAYIERDVYRPKFLTRTVRITFGFNCRNKDHYGIMMYHKNRLIKAYEKVGCQLKANNMGVGVVGIIECNFLKPTHNKQDFDYTNEYRLTILALGEKLNDYWNEMKVKKNAEYPVNLPVEDIQKRPDQTWVQCDACLKWRKLPDGIDQLPEKWYCSNNPDPQFRNCEVPEEPEDEDLVHPTYEKTYKKTSKERFRIRQPEILPRILPQINPELLYQTSVSSQSFSPVKESVPRPHLSEVTSPFAARIINLNLASPASEPENSSMKRKLGVHSSILNAKTRRLSNPPVENSSYKNDDDEDVIILEENSTPKPAVDLEVKSDIEVKSEQSHTEQSGIHVDLVSSPKPCVQASSTSTSTSRSDPGITVSTQTDAPGLTVKKEESMEEDMGVRNGTATLSCVGTEAKVQETSAESVDATSHQLQELRSELLVVTQERDDYKRQCQMFTDQIQVLQQRLLEMNDKCVKKEKCHQSTETDAVFLLDSVNGQAESLDHLGSQYQQALQEIERLKRQCSALQQVKSECSQASCTESKSEVDEMAVQLDDVFRQLDKCTIERDQYKNEVQLLEIEKSHIHSQCEELQTEVEQLKSTGQQAAADGSTASNAEEPVSYVDGESLKLRSLRVNVGQLLAMIVPDLDLQQVNYDVDVVDEILGQVVEQMSEISST.

Glycyl lysine isopeptide (Lys-Gly) (interchain with G-Cter in SUMO2) cross-links involve residues K191, K205, K280, and K293. Residues 326–353 (AYEKVGCQLKANNMGVGVVGIIECNFLK) are nuclear matrix binding. Residues 404-454 (KRPDQTWVQCDACLKWRKLPDGIDQLPEKWYCSNNPDPQFRNCEVPEEPED) form a CW-type zinc finger. Residues C413, C416, C435, and C446 each coordinate Zn(2+). The tract at residues 503–594 (SFSPVKESVP…ENSTPKPAVD (92 aa)) is RNA binding. Phosphoserine occurs at positions 517 and 543. K558 is covalently cross-linked (Glycyl lysine isopeptide (Lys-Gly) (interchain with G-Cter in SUMO2)). S563 bears the Phosphoserine mark. A Glycyl lysine isopeptide (Lys-Gly) (interchain with G-Cter in SUMO1); alternate cross-link involves residue K604. A Glycyl lysine isopeptide (Lys-Gly) (interchain with G-Cter in SUMO2); alternate cross-link involves residue K604. A disordered region spans residues 623–654 (PKPCVQASSTSTSTSRSDPGITVSTQTDAPGL). Residues 630 to 639 (SSTSTSTSRS) show a composition bias toward low complexity. Glycyl lysine isopeptide (Lys-Gly) (interchain with G-Cter in SUMO1); alternate cross-links involve residues K657, K658, and K743. Glycyl lysine isopeptide (Lys-Gly) (interchain with G-Cter in SUMO2); alternate cross-links involve residues K657, K658, and K743. A coiled-coil region spans residues 696-874 (SHQLQELRSE…KSTGQQAAAD (179 aa)). S768 carries the phosphoserine modification. K797 is covalently cross-linked (Glycyl lysine isopeptide (Lys-Gly) (interchain with G-Cter in SUMO1); alternate). A Glycyl lysine isopeptide (Lys-Gly) (interchain with G-Cter in SUMO2); alternate cross-link involves residue K797.

Homodimer. The sumoylated form interacts with PML (via SUMO-interacting motif). Interacts with TP53. Sumoylation is involved in interaction with PML and localization to PML nuclear bodies.

It localises to the nucleus. The protein resides in the nucleoplasm. The protein localises to the nucleus matrix. Its subcellular location is the PML body. It is found in the chromosome. With respect to regulation, dimerization of the ATPase domain is strictly required for the catalytic activity and binding to double-stranded DNA. Disrupting the interface between ATPase and the CW domains releases autoinhibition since the CW domain sterically impedes binding of the ATPase domain to DNA. In terms of biological role, nuclear matrix protein which forms MORC3-NBs (nuclear bodies) via an ATP-dependent mechanism and plays a role in innate immunity by restricting different viruses through modulation of the IFN response. Mechanistically, possesses a primary antiviral function through a MORC3-regulated element that activates IFNB1, and this function is guarded by a secondary IFN-repressing function. Sumoylated MORC3-NBs associates with PML-NBs and recruits TP53 and SP100, thus regulating TP53 activity. Binds RNA in vitro. Histone methylation reader which binds to non-methylated (H3K4me0), monomethylated (H3K4me1), dimethylated (H3K4me2) and trimethylated (H3K4me3) 'Lys-4' on histone H3. The order of binding preference is H3K4me3 &gt; H3K4me2 &gt; H3K4me1 &gt; H3K4me0. The sequence is that of MORC family CW-type zinc finger protein 3 from Mus musculus (Mouse).